The sequence spans 186 residues: Archaemetzincin (186 aa).

His-136 is a binding site for Zn(2+). The active-site Proton acceptor is the Glu-137. Zn(2+) is bound by residues His-140, His-146, Cys-147, Cys-152, Cys-171, and Cys-174.

This sequence belongs to the peptidase M54 family. As to quaternary structure, monomer. Zn(2+) serves as cofactor.

Functionally, probable zinc metalloprotease whose natural substrate is unknown. In Thermococcus kodakarensis (strain ATCC BAA-918 / JCM 12380 / KOD1) (Pyrococcus kodakaraensis (strain KOD1)), this protein is Archaemetzincin.